Here is a 154-residue protein sequence, read N- to C-terminus: Protein-export protein SecB (154 aa).

This sequence belongs to the SecB family. Homotetramer, a dimer of dimers. One homotetramer interacts with 1 SecA dimer.

Its subcellular location is the cytoplasm. In terms of biological role, one of the proteins required for the normal export of preproteins out of the cell cytoplasm. It is a molecular chaperone that binds to a subset of precursor proteins, maintaining them in a translocation-competent state. It also specifically binds to its receptor SecA. This Vibrio parahaemolyticus serotype O3:K6 (strain RIMD 2210633) protein is Protein-export protein SecB.